Here is a 684-residue protein sequence, read N- to C-terminus: DNA ligase (684 aa).

NAD(+)-binding positions include 34-38 (DFQYD), 83-84 (SL), and E117. The N6-AMP-lysine intermediate role is filled by K119. NAD(+)-binding residues include R140, E186, K300, and K324. Zn(2+) is bound by residues C418, C421, C436, and C442. Positions 601–684 (PVNLNFDGMK…EMLGEVGSNE (84 aa)) constitute a BRCT domain.

It belongs to the NAD-dependent DNA ligase family. LigA subfamily. It depends on Mg(2+) as a cofactor. Mn(2+) is required as a cofactor.

The enzyme catalyses NAD(+) + (deoxyribonucleotide)n-3'-hydroxyl + 5'-phospho-(deoxyribonucleotide)m = (deoxyribonucleotide)n+m + AMP + beta-nicotinamide D-nucleotide.. Functionally, DNA ligase that catalyzes the formation of phosphodiester linkages between 5'-phosphoryl and 3'-hydroxyl groups in double-stranded DNA using NAD as a coenzyme and as the energy source for the reaction. It is essential for DNA replication and repair of damaged DNA. The chain is DNA ligase from Chlorobium phaeobacteroides (strain BS1).